The following is a 129-amino-acid chain: UPF0102 protein Cag_1992 (129 aa).

Belongs to the UPF0102 family.

The protein is UPF0102 protein Cag_1992 of Chlorobium chlorochromatii (strain CaD3).